Here is a 249-residue protein sequence, read N- to C-terminus: 5'-nucleotidase SurE (249 aa).

Positions 8, 9, 39, and 91 each coordinate a divalent metal cation.

This sequence belongs to the SurE nucleotidase family. A divalent metal cation is required as a cofactor.

Its subcellular location is the cytoplasm. It carries out the reaction a ribonucleoside 5'-phosphate + H2O = a ribonucleoside + phosphate. In terms of biological role, nucleotidase that shows phosphatase activity on nucleoside 5'-monophosphates. This is 5'-nucleotidase SurE from Pseudomonas entomophila (strain L48).